Reading from the N-terminus, the 79-residue chain is Tungsten-containing formylmethanofuran dehydrogenase 2 subunit G (79 aa).

2 consecutive 4Fe-4S ferredoxin-type domains span residues 2-31 (VKIVIHEERCHGCGNCVIACPVNACNSPNV) and 51-79 (TVSVINEDLCEACMTCELACPVDAIEIKT). [4Fe-4S] cluster-binding residues include cysteine 11, cysteine 14, cysteine 17, cysteine 21, cysteine 60, cysteine 63, cysteine 66, and cysteine 70.

[4Fe-4S] cluster serves as cofactor.

The enzyme catalyses N-formylmethanofuran + 2 oxidized [2Fe-2S]-[ferredoxin] + H2O = methanofuran + 2 reduced [2Fe-2S]-[ferredoxin] + CO2 + H(+). It participates in one-carbon metabolism; methanogenesis from CO(2); 5,10-methenyl-5,6,7,8-tetrahydromethanopterin from CO(2): step 1/3. Not inactivated by cyanide. In terms of biological role, catalyzes the reversible oxidation of CO(2) and methanofuran (MFR) to N-formylmethanofuran (CHO-MFR). This enzyme is oxygen-labile. May function as an electron transfer protein. This Methanopyrus kandleri (strain AV19 / DSM 6324 / JCM 9639 / NBRC 100938) protein is Tungsten-containing formylmethanofuran dehydrogenase 2 subunit G (fwdG).